The primary structure comprises 173 residues: Alkyl hydroperoxide reductase AhpD (173 aa).

Catalysis depends on Cys131, which acts as the Proton donor. An intrachain disulfide couples Cys131 to Cys134. The active-site Cysteine sulfenic acid (-SOH) intermediate is Cys134.

This sequence belongs to the AhpD family.

The enzyme catalyses N(6)-[(R)-dihydrolipoyl]-L-lysyl-[lipoyl-carrier protein] + a hydroperoxide = N(6)-[(R)-lipoyl]-L-lysyl-[lipoyl-carrier protein] + an alcohol + H2O. In terms of biological role, antioxidant protein with alkyl hydroperoxidase activity. Required for the reduction of the AhpC active site cysteine residues and for the regeneration of the AhpC enzyme activity. This Maricaulis maris (strain MCS10) (Caulobacter maris) protein is Alkyl hydroperoxide reductase AhpD.